A 99-amino-acid chain; its full sequence is Cell division protein FtsB (99 aa).

Residues Met1–Val3 lie on the Cytoplasmic side of the membrane. A helical transmembrane segment spans residues Phe4 to Phe21. The Periplasmic portion of the chain corresponds to Gly22–Asn99. A coiled-coil region spans residues Tyr29–Leu53.

This sequence belongs to the FtsB family. As to quaternary structure, part of a complex composed of FtsB, FtsL and FtsQ.

It is found in the cell inner membrane. Its function is as follows. Essential cell division protein. May link together the upstream cell division proteins, which are predominantly cytoplasmic, with the downstream cell division proteins, which are predominantly periplasmic. In Colwellia psychrerythraea (strain 34H / ATCC BAA-681) (Vibrio psychroerythus), this protein is Cell division protein FtsB.